The sequence spans 414 residues: Voltage-gated ClC-type chloride channel ClcB (414 aa).

Transmembrane regions (helical) follow at residues 5-25 (LVISIMLGMVSALIVWLFHQA), 54-74 (ALTPALGGLAAGLLLWAYQRY), 116-136 (SAIGREGAMVLLAALFASVFA), 147-167 (LWVACGAAAGMASAYHAPLAG), 169-189 (LFIAEILFGTLMLASLGPVVI), 220-240 (VQYFLMALLGLMAGFSGPLFL), 255-275 (LLPPLQLALGGIIVGLLSLIF), 292-312 (TPPGVLLIGGILICKLLAVLA), 327-347 (LFVGAALGMLCGQIFSLWPVL), 353-373 (LLMALTGMATLLAATTHAPIM), and 381-401 (MTGEYTLLPGLLLSCVIATTI).

It belongs to the chloride channel (TC 2.A.49) family. ClcB subfamily.

Its subcellular location is the cell inner membrane. Probably acts as an electrical shunt for an outwardly-directed proton pump that is linked to amino acid decarboxylation, as part of the extreme acid resistance (XAR) response. This is Voltage-gated ClC-type chloride channel ClcB from Yersinia pseudotuberculosis serotype O:1b (strain IP 31758).